Here is a 312-residue protein sequence, read N- to C-terminus: DNA-directed RNA polymerase subunit alpha (312 aa).

Residues 1–226 are alpha N-terminal domain (alpha-NTD); the sequence is MIEFEKPNIT…EHFKVFMSTD (226 aa). The tract at residues 243-312 is alpha C-terminal domain (alpha-CTD); sequence NEKKLEMTIE…DLGLSLRQDD (70 aa).

It belongs to the RNA polymerase alpha chain family. Homodimer. The RNAP catalytic core consists of 2 alpha, 1 beta, 1 beta' and 1 omega subunit. When a sigma factor is associated with the core the holoenzyme is formed, which can initiate transcription.

The catalysed reaction is RNA(n) + a ribonucleoside 5'-triphosphate = RNA(n+1) + diphosphate. Functionally, DNA-dependent RNA polymerase catalyzes the transcription of DNA into RNA using the four ribonucleoside triphosphates as substrates. This is DNA-directed RNA polymerase subunit alpha from Lactobacillus johnsonii (strain CNCM I-12250 / La1 / NCC 533).